Here is a 140-residue protein sequence, read N- to C-terminus: 3-hydroxyacyl-[acyl-carrier-protein] dehydratase FabZ (140 aa).

His-47 is an active-site residue.

This sequence belongs to the thioester dehydratase family. FabZ subfamily.

The protein localises to the cytoplasm. It carries out the reaction a (3R)-hydroxyacyl-[ACP] = a (2E)-enoyl-[ACP] + H2O. In terms of biological role, involved in unsaturated fatty acids biosynthesis. Catalyzes the dehydration of short chain beta-hydroxyacyl-ACPs and long chain saturated and unsaturated beta-hydroxyacyl-ACPs. The sequence is that of 3-hydroxyacyl-[acyl-carrier-protein] dehydratase FabZ from Streptococcus gordonii (strain Challis / ATCC 35105 / BCRC 15272 / CH1 / DL1 / V288).